Here is a 201-residue protein sequence, read N- to C-terminus: Holliday junction branch migration complex subunit RuvA (201 aa).

The tract at residues 1–64 (MIGRLYGKII…EDAHLLFGFA (64 aa)) is domain I. Positions 65 to 143 (QKQDRTLFRE…GIAQTDFFVE (79 aa)) are domain II. Residues 144–154 (HSHETMVATYE) form a flexible linker region. Residues 154 to 201 (EIDASEEARDALLALGYKLTDAEKMIKKVHKSGATSEQLIRDALKASL) are domain III.

The protein belongs to the RuvA family. As to quaternary structure, homotetramer. Forms an RuvA(8)-RuvB(12)-Holliday junction (HJ) complex. HJ DNA is sandwiched between 2 RuvA tetramers; dsDNA enters through RuvA and exits via RuvB. An RuvB hexamer assembles on each DNA strand where it exits the tetramer. Each RuvB hexamer is contacted by two RuvA subunits (via domain III) on 2 adjacent RuvB subunits; this complex drives branch migration. In the full resolvosome a probable DNA-RuvA(4)-RuvB(12)-RuvC(2) complex forms which resolves the HJ.

It localises to the cytoplasm. Its function is as follows. The RuvA-RuvB-RuvC complex processes Holliday junction (HJ) DNA during genetic recombination and DNA repair, while the RuvA-RuvB complex plays an important role in the rescue of blocked DNA replication forks via replication fork reversal (RFR). RuvA specifically binds to HJ cruciform DNA, conferring on it an open structure. The RuvB hexamer acts as an ATP-dependent pump, pulling dsDNA into and through the RuvAB complex. HJ branch migration allows RuvC to scan DNA until it finds its consensus sequence, where it cleaves and resolves the cruciform DNA. This chain is Holliday junction branch migration complex subunit RuvA, found in Haemophilus ducreyi (strain 35000HP / ATCC 700724).